A 65-amino-acid polypeptide reads, in one-letter code: Large ribosomal subunit protein bL35 (65 aa).

The interval 1-22 (MPKIKTVRGAAKRFKKTGSGGF) is disordered. The segment covering 10-22 (AAKRFKKTGSGGF) has biased composition (basic residues).

The protein belongs to the bacterial ribosomal protein bL35 family.

In Serratia proteamaculans (strain 568), this protein is Large ribosomal subunit protein bL35.